The following is a 116-amino-acid chain: Class I hydrophobin 1 (116 aa).

Positions 1–19 (MLFKQAILVATTLTDLAVA) are cleaved as a signal peptide. Cystine bridges form between cysteine 35–cysteine 95, cysteine 42–cysteine 89, cysteine 43–cysteine 76, and cysteine 96–cysteine 109. N-linked (GlcNAc...) asparagine glycans are attached at residues asparagine 44 and asparagine 100.

The protein belongs to the fungal hydrophobin family. Self-assembles to form functional amyloid fibrils called rodlets. Self-assembly into fibrillar rodlets occurs spontaneously at hydrophobic:hydrophilic interfaces and the rodlets further associate laterally to form amphipathic monolayers.

It localises to the secreted. Its subcellular location is the cell wall. Its function is as follows. Aerial growth, conidiation, and dispersal of filamentous fungi in the environment rely upon a capability of their secreting small amphipathic proteins called hydrophobins (HPBs) with low sequence identity. Class I can self-assemble into an outermost layer of rodlet bundles on aerial cell surfaces, conferring cellular hydrophobicity that supports fungal growth, development and dispersal; whereas Class II form highly ordered films at water-air interfaces through intermolecular interactions but contribute nothing to the rodlet structure. The protein is Class I hydrophobin 1 of Pleurotus ostreatus (Oyster mushroom).